The following is a 352-amino-acid chain: Photosystem II protein D1 (352 aa).

An N-acetylthreonine modification is found at threonine 2. Position 2 is a phosphothreonine (threonine 2). Helical transmembrane passes span 29 to 46 (YIGW…TATS), 118 to 133 (HFLL…EWEL), and 142 to 156 (WIAV…AASA). Histidine 118 is a chlorophyll a binding site. Tyrosine 126 contributes to the pheophytin a binding site. [CaMn4O5] cluster is bound by residues aspartate 170 and glutamate 189. A helical transmembrane segment spans residues 197 to 218 (FHMLGVAGVFGGSLFSAMHGSL). Histidine 198 is a chlorophyll a binding site. Residues histidine 215 and 264-265 (SF) contribute to the a quinone site. A Fe cation-binding site is contributed by histidine 215. Residue histidine 272 participates in Fe cation binding. The chain crosses the membrane as a helical span at residues 274 to 288 (FLAAWPVIGIWFTAL). [CaMn4O5] cluster is bound by residues histidine 332, glutamate 333, aspartate 342, and alanine 344. A propeptide spanning residues 345 to 352 (STNSSSNN) is cleaved from the precursor.

Belongs to the reaction center PufL/M/PsbA/D family. PSII is composed of 1 copy each of membrane proteins PsbA, PsbB, PsbC, PsbD, PsbE, PsbF, PsbH, PsbI, PsbJ, PsbK, PsbL, PsbM, PsbT, PsbX, PsbY, PsbZ, Psb30/Ycf12, at least 3 peripheral proteins of the oxygen-evolving complex and a large number of cofactors. It forms dimeric complexes. Requires The D1/D2 heterodimer binds P680, chlorophylls that are the primary electron donor of PSII, and subsequent electron acceptors. It shares a non-heme iron and each subunit binds pheophytin, quinone, additional chlorophylls, carotenoids and lipids. D1 provides most of the ligands for the Mn4-Ca-O5 cluster of the oxygen-evolving complex (OEC). There is also a Cl(-1) ion associated with D1 and D2, which is required for oxygen evolution. The PSII complex binds additional chlorophylls, carotenoids and specific lipids. as cofactor. Post-translationally, tyr-161 forms a radical intermediate that is referred to as redox-active TyrZ, YZ or Y-Z. In terms of processing, C-terminally processed by CTPA; processing is essential to allow assembly of the oxygen-evolving complex and thus photosynthetic growth.

The protein resides in the plastid. It localises to the chloroplast thylakoid membrane. The enzyme catalyses 2 a plastoquinone + 4 hnu + 2 H2O = 2 a plastoquinol + O2. Its function is as follows. This is one of the two reaction center proteins of photosystem II. In terms of biological role, photosystem II (PSII) is a light-driven water:plastoquinone oxidoreductase that uses light energy to abstract electrons from H(2)O, generating O(2) and a proton gradient subsequently used for ATP formation. It consists of a core antenna complex that captures photons, and an electron transfer chain that converts photonic excitation into a charge separation. The D1/D2 (PsbA/PsbD) reaction center heterodimer binds P680, the primary electron donor of PSII as well as several subsequent electron acceptors. This chain is Photosystem II protein D1, found in Chlamydomonas reinhardtii (Chlamydomonas smithii).